The chain runs to 107 residues: Integration host factor subunit beta (107 aa).

Residues 78 to 107 (PHFKPGKELRERVDGRAGEPLKADEPDDER) form a disordered region. A compositionally biased stretch (basic and acidic residues) spans 82–101 (PGKELRERVDGRAGEPLKAD).

Belongs to the bacterial histone-like protein family. As to quaternary structure, heterodimer of an alpha and a beta chain.

Functionally, this protein is one of the two subunits of integration host factor, a specific DNA-binding protein that functions in genetic recombination as well as in transcriptional and translational control. This Burkholderia multivorans (strain ATCC 17616 / 249) protein is Integration host factor subunit beta.